Reading from the N-terminus, the 452-residue chain is GTPase Der (452 aa).

2 EngA-type G domains span residues 4–169 and 177–352; these read PIVA…PTTE and IKVA…ASHR. GTP is bound by residues 10-17, 57-61, 120-123, 183-190, 230-234, and 295-298; these read GRPNVGKS, DTGGL, NKCE, DTAGI, and NKWD. The KH-like domain occupies 353-438; that stretch reads RRVSTAVINE…PIRLIWRGKS (86 aa).

Belongs to the TRAFAC class TrmE-Era-EngA-EngB-Septin-like GTPase superfamily. EngA (Der) GTPase family. In terms of assembly, associates with the 50S ribosomal subunit.

GTPase that plays an essential role in the late steps of ribosome biogenesis. This chain is GTPase Der, found in Gloeothece citriformis (strain PCC 7424) (Cyanothece sp. (strain PCC 7424)).